We begin with the raw amino-acid sequence, 285 residues long: Acetylglutamate kinase (285 aa).

Substrate-binding positions include 63-64 (GG), Arg85, and Asn178.

This sequence belongs to the acetylglutamate kinase family. ArgB subfamily.

Its subcellular location is the cytoplasm. The catalysed reaction is N-acetyl-L-glutamate + ATP = N-acetyl-L-glutamyl 5-phosphate + ADP. The protein operates within amino-acid biosynthesis; L-arginine biosynthesis; N(2)-acetyl-L-ornithine from L-glutamate: step 2/4. Catalyzes the ATP-dependent phosphorylation of N-acetyl-L-glutamate. This Synechococcus sp. (strain CC9311) protein is Acetylglutamate kinase.